The following is a 205-amino-acid chain: N-(5'-phosphoribosyl)anthranilate isomerase (205 aa).

Belongs to the TrpF family.

It catalyses the reaction N-(5-phospho-beta-D-ribosyl)anthranilate = 1-(2-carboxyphenylamino)-1-deoxy-D-ribulose 5-phosphate. Its pathway is amino-acid biosynthesis; L-tryptophan biosynthesis; L-tryptophan from chorismate: step 3/5. This Clostridium acetobutylicum (strain ATCC 824 / DSM 792 / JCM 1419 / IAM 19013 / LMG 5710 / NBRC 13948 / NRRL B-527 / VKM B-1787 / 2291 / W) protein is N-(5'-phosphoribosyl)anthranilate isomerase.